The chain runs to 365 residues: GTPase Obg (365 aa).

One can recognise an Obg domain in the interval 1–177 (MFTDYVRILA…GQFLLELKTI (177 aa)). The disordered stretch occupies residues 64–85 (QFAEDGQPGKGQKRKGRDGKNL). The OBG-type G domain maps to 178–348 (ADVGFVGLPN…FLNSCRKSFE (171 aa)). GTP is bound by residues 184 to 191 (GLPNSGKS), 209 to 213 (FTTLK), 231 to 234 (DIPG), 300 to 303 (NKVD), and 329 to 331 (SAL). Mg(2+) contacts are provided by serine 191 and threonine 211.

The protein belongs to the TRAFAC class OBG-HflX-like GTPase superfamily. OBG GTPase family. As to quaternary structure, monomer. It depends on Mg(2+) as a cofactor.

It localises to the cytoplasm. An essential GTPase which binds GTP, GDP and possibly (p)ppGpp with moderate affinity, with high nucleotide exchange rates and a fairly low GTP hydrolysis rate. Plays a role in control of the cell cycle, stress response, ribosome biogenesis and in those bacteria that undergo differentiation, in morphogenesis control. In Methylacidiphilum infernorum (isolate V4) (Methylokorus infernorum (strain V4)), this protein is GTPase Obg.